A 539-amino-acid chain; its full sequence is GMP synthase [glutamine-hydrolyzing] (539 aa).

Residues 20–215 (TILILDFGSQ…AIEICHAKPN (196 aa)) form the Glutamine amidotransferase type-1 domain. Cys96 acts as the Nucleophile in catalysis. Catalysis depends on residues His189 and Glu191. One can recognise a GMPS ATP-PPase domain in the interval 216–413 (WSMENFVDKE…LGIEHSLVWR (198 aa)). Position 244 to 250 (244 to 250 (SGGVDST)) interacts with ATP. The XMP site is built by Arg317, Asp475, Lys531, and Glu537.

As to quaternary structure, homodimer. The cofactor is Mg(2+).

Its subcellular location is the cytoplasm. The protein resides in the cytosol. It catalyses the reaction XMP + L-glutamine + ATP + H2O = GMP + L-glutamate + AMP + diphosphate + 2 H(+). Its pathway is purine metabolism; GMP biosynthesis; GMP from XMP (L-Gln route): step 1/1. Catalyzes the conversion of xanthine monophosphate (XMP) to GMP in the presence of glutamine and ATP through an adenyl-XMP intermediate. The chain is GMP synthase [glutamine-hydrolyzing] from Schizosaccharomyces pombe (strain 972 / ATCC 24843) (Fission yeast).